We begin with the raw amino-acid sequence, 398 residues long: 1-deoxy-D-xylulose 5-phosphate reductoisomerase (398 aa).

NADPH-binding residues include Thr-10, Gly-11, Ser-12, Ile-13, Lys-37, Asn-38, and Asn-124. 1-deoxy-D-xylulose 5-phosphate is bound at residue Lys-125. Glu-126 contributes to the NADPH binding site. Asp-150 lines the Mn(2+) pocket. 1-deoxy-D-xylulose 5-phosphate-binding residues include Ser-151, Glu-152, Ser-186, and His-209. Glu-152 is a Mn(2+) binding site. NADPH is bound at residue Gly-215. Positions 222, 227, 228, and 231 each coordinate 1-deoxy-D-xylulose 5-phosphate. Glu-231 contacts Mn(2+).

This sequence belongs to the DXR family. As to quaternary structure, homodimer. Mg(2+) serves as cofactor. Mn(2+) is required as a cofactor.

The enzyme catalyses 2-C-methyl-D-erythritol 4-phosphate + NADP(+) = 1-deoxy-D-xylulose 5-phosphate + NADPH + H(+). It functions in the pathway isoprenoid biosynthesis; isopentenyl diphosphate biosynthesis via DXP pathway; isopentenyl diphosphate from 1-deoxy-D-xylulose 5-phosphate: step 1/6. Catalyzes the NADPH-dependent rearrangement and reduction of 1-deoxy-D-xylulose-5-phosphate (DXP) to 2-C-methyl-D-erythritol 4-phosphate (MEP). The sequence is that of 1-deoxy-D-xylulose 5-phosphate reductoisomerase from Buchnera aphidicola subsp. Acyrthosiphon pisum (strain APS) (Acyrthosiphon pisum symbiotic bacterium).